The primary structure comprises 111 residues: MKDPYDVVKRHYVTEKAKMLEGLSLGDGEGKKKGSFCKDPKYIFIVAGDATKPMIAEAIEAIYSAKGVKVKKVNTMCVKPQPTRIFRGRRKGRTAGFKKAIVTFVDGHSIG.

The protein belongs to the universal ribosomal protein uL23 family. In terms of assembly, part of the 50S ribosomal subunit. Contacts protein L29, and trigger factor when it is bound to the ribosome.

In terms of biological role, one of the early assembly proteins it binds 23S rRNA. One of the proteins that surrounds the polypeptide exit tunnel on the outside of the ribosome. Forms the main docking site for trigger factor binding to the ribosome. The chain is Large ribosomal subunit protein uL23 from Chlamydia trachomatis serovar A (strain ATCC VR-571B / DSM 19440 / HAR-13).